Here is a 90-residue protein sequence, read N- to C-terminus: Progonadoliberin-3 (90 aa).

Residues 1–23 (MEASSRVTVQVLLLALVVQVTLS) form the signal peptide. At Q24 the chain carries Pyrrolidone carboxylic acid. G33 carries the post-translational modification Glycine amide.

It belongs to the GnRH family.

The protein localises to the secreted. In terms of biological role, stimulates the secretion of gonadotropins. The sequence is that of Progonadoliberin-3 (gnrh3) from Sparus aurata (Gilthead sea bream).